The chain runs to 158 residues: Large ribosomal subunit protein eL20z (158 aa).

The protein belongs to the eukaryotic ribosomal protein eL20 family.

This Arabidopsis thaliana (Mouse-ear cress) protein is Large ribosomal subunit protein eL20z (RPL18A1).